The chain runs to 160 residues: Cytochrome b6-f complex subunit 4 (160 aa).

Transmembrane regions (helical) follow at residues 36–56 (LLYM…SLAV), 95–115 (LLGV…PFIE), and 131–151 (TLFL…ALPI).

Belongs to the cytochrome b family. PetD subfamily. The 4 large subunits of the cytochrome b6-f complex are cytochrome b6, subunit IV (17 kDa polypeptide, petD), cytochrome f and the Rieske protein, while the 4 small subunits are petG, petL, petM and petN. The complex functions as a dimer.

It localises to the plastid. Its subcellular location is the chloroplast thylakoid membrane. Component of the cytochrome b6-f complex, which mediates electron transfer between photosystem II (PSII) and photosystem I (PSI), cyclic electron flow around PSI, and state transitions. The polypeptide is Cytochrome b6-f complex subunit 4 (Oltmannsiellopsis viridis (Marine flagellate)).